The chain runs to 157 residues: NudC domain-containing protein 2 (157 aa).

Residue Ser2 is modified to N-acetylserine. A CS domain is found at 14–104 (CGTPWGQWYQ…DAANCWTSLL (91 aa)). The segment at 134 to 157 (FDFSGAEISGNYTKGGPDFSNLEK) is disordered. Residue Ser142 is modified to Phosphoserine. Phosphotyrosine is present on Tyr145.

Interacts with LIS1.

It is found in the chromosome. It localises to the centromere. The protein resides in the kinetochore. The protein localises to the cytoplasm. Its subcellular location is the cytoskeleton. It is found in the microtubule organizing center. It localises to the centrosome. The protein resides in the spindle pole. Functionally, may regulate the LIS1/dynein pathway by stabilizing LIS1 with Hsp90 chaperone. The polypeptide is NudC domain-containing protein 2 (Nudcd2) (Mus musculus (Mouse)).